The sequence spans 1461 residues: Major viral transcription factor ICP4 homolog (1461 aa).

4 disordered regions span residues 25–60 (AAEE…GGLF), 75–518 (AAGA…SREG), 811–1002 (RPGP…PRPS), and 1395–1461 (AGGA…LLLR). The segment covering 75–90 (AAGATRPPRPPSAQQQ) has biased composition (low complexity). Residues 102–113 (VLDDEDEEEDEP) show a composition bias toward acidic residues. 2 stretches are compositionally biased toward low complexity: residues 167–197 (RSSP…APRR) and 224–249 (PAAV…PVSA). Over residues 250 to 260 (PGGGGAPSGGG) the composition is skewed to gly residues. Basic and acidic residues predominate over residues 270–285 (REPLLDEPAAARRLDP). 2 stretches are compositionally biased toward low complexity: residues 292 to 308 (SPVS…TTTV) and 353 to 405 (GFSS…SSSS). Residues 423–434 (GPPPSPPAPAAA) are compositionally biased toward pro residues. Positions 435 to 453 (PRPSASSASATSSSAAASP) are enriched in low complexity. Over residues 814 to 826 (PAEPAPGLPPLWP) the composition is skewed to pro residues. Positions 838–888 (PAAAGAPSGLPGSGPSSPASTKSGSSTKSSSGTKSGLSGSSGYASSPAAGP) are enriched in low complexity. The span at 894–903 (RRKKKRRAPG) shows a compositional bias: basic residues. A compositionally biased stretch (low complexity) spans 944–965 (LGLGPAPDPAPALVSSSSSSSS).

Belongs to the herpesviridae ICP4 family. In terms of processing, a long stretch of serine residues may be a major site of phosphorylation.

It is found in the host nucleus. This IE protein is a multifunctional protein capable of migrating to the nucleus, binding to DNA, trans-activating other viral genes, and autoregulating its own synthesis. This is Major viral transcription factor ICP4 homolog (IE) from Sus scrofa (Pig).